Reading from the N-terminus, the 255-residue chain is Endonuclease 8 2 (255 aa).

Proline 2 acts as the Schiff-base intermediate with DNA in catalysis. Glutamate 3 acts as the Proton donor in catalysis. Residue lysine 51 is the Proton donor; for beta-elimination activity of the active site. DNA-binding residues include glutamine 67 and asparagine 164. The segment at 221-255 adopts an FPG-type zinc-finger fold; it reads WVYGRAGQGCRRCGTLIAYDTTDERVRYWCPACQR. Arginine 245 acts as the Proton donor; for delta-elimination activity in catalysis.

The protein belongs to the FPG family. Zn(2+) is required as a cofactor.

It catalyses the reaction 2'-deoxyribonucleotide-(2'-deoxyribose 5'-phosphate)-2'-deoxyribonucleotide-DNA = a 3'-end 2'-deoxyribonucleotide-(2,3-dehydro-2,3-deoxyribose 5'-phosphate)-DNA + a 5'-end 5'-phospho-2'-deoxyribonucleoside-DNA + H(+). Functionally, involved in base excision repair of DNA damaged by oxidation or by mutagenic agents. Acts as a DNA glycosylase that recognizes and removes damaged bases. Has AP (apurinic/apyrimidinic) lyase activity and introduces nicks in the DNA strand. Cleaves the DNA backbone by beta-delta elimination to generate a single-strand break at the site of the removed base with both 3'- and 5'-phosphates. In Mycobacterium bovis (strain ATCC BAA-935 / AF2122/97), this protein is Endonuclease 8 2 (nei2).